We begin with the raw amino-acid sequence, 929 residues long: MAEPEKKRDQPFSQEKDEEKDLYLVHDEHESPLPLTVTSRVLYMLGDIASGPAYRFTQWLDLVRKRSATYGSSGFPHRLHRIDDMVTSAGERNTDPKSPPSRQSSEISLWERLGKASTVDIDSSCFSWNMLSSLHHTEHSSSTDHSEEDQSKPLEVTVNSGGVVFFALFNSSSSEDASRKEEAAVIKFASSRMATQSERLGYEFSKWLGVQIPQARVIHSCNPEWTLIKEATEKAQAKATSEGDEVGEMTCSELLEALELSRCLLLMSYVHGCPMLESMSSFETEEKAERAAAALGRILVLDLVIRNEDRLPCRQLRWRGNPANLLLTDRIVSSAKHHECSFDEAFDSAIKRYHPKDYRSIQRERRASSVDSRSRLSISDQMLVSQASDFSDITESPRSYDTGLMSPMSDRSVAADFHLVAIDSGVPRRPPAGKRASDQEIYPRLVELLLNSSQYSSNLLHEITEGSLGYPQAEDGEETSNVRSVVTPVVREFRNGFRAGLRDLQEFHIFLVTLHQKLDVLLRAFFSMMDKTMCADFDREDFAVPESPSHTHGHEVNHYPSPSKDRVPSDNSSDHSESDMQKSVPRTPNSENKEDGSSPKSRESWHGRSGKGGESLSSQRLAAKLRDFHKFAKVDAESNKELDQWNETLRNEVMKLCQENGFNTGFFEGSDNNSCTDAYELKVRLEHILERISLISKAANTEKPSMIQENLFIGGGLAARSIYTLQHLGITHVLCLCANEIGQSDTQYPDLFEYQNFSITDDEDSNIESIFQEALDFIKHGEETGGKILVHCFEGRSRSATVVLAYLMLQKKLTLLEAWSKLRKVHRRAQPNDGFARILINLDKKCHGKVSMEWRQRKPTMKVCPVCGKNAGLSSSSLKLHLQKSHRKLSSGSVDSAMNMEIQKALEALKLSTGRGSSASSNSFQSHPG.

Disordered regions lie at residues 1–27 (MAEP…LVHD) and 545–618 (PESP…SLSS). 2 stretches are compositionally biased toward basic and acidic residues: residues 552–580 (HGHE…ESDM) and 591–606 (ENKE…ESWH). A Tyrosine-protein phosphatase domain is found at 703 to 848 (KPSMIQENLF…LINLDKKCHG (146 aa)). C792 serves as the catalytic Phosphocysteine intermediate. 792–798 (CFEGRSR) serves as a coordination point for substrate. Residues 903–911 (QKALEALKL) carry the Nuclear export signal motif.

Interacts with MPK18. As to expression, expressed in roots, leaves and flowers.

Its subcellular location is the cytoplasm. The enzyme catalyses O-phospho-L-seryl-[protein] + H2O = L-seryl-[protein] + phosphate. The catalysed reaction is O-phospho-L-threonyl-[protein] + H2O = L-threonyl-[protein] + phosphate. It carries out the reaction O-phospho-L-tyrosyl-[protein] + H2O = L-tyrosyl-[protein] + phosphate. Its function is as follows. Probable dual specificity phosphatase that binds and dephosphorylates MPK18, modulating the organization and dynamics of cortical microtubules. Acts as a negative regulator of abscisic acid (ABA) signaling during seed germination and light-induced stomata aperture. This Arabidopsis thaliana (Mouse-ear cress) protein is Dual specificity protein phosphatase PHS1 (PHS1).